The following is a 239-amino-acid chain: Thymidylate kinase (239 aa).

Residue 10-17 (GVNRVGKS) participates in ATP binding.

Belongs to the thymidylate kinase family.

The catalysed reaction is dTMP + ATP = dTDP + ADP. It participates in pyrimidine metabolism; dTTP biosynthesis. Catalyzes the conversion of dTMP to dTDP. This African swine fever virus (isolate Tick/South Africa/Pretoriuskop Pr4/1996) (ASFV) protein is Thymidylate kinase (TMK).